We begin with the raw amino-acid sequence, 444 residues long: Serine carboxypeptidase-like 50 (444 aa).

A signal peptide spans 1 to 22 (MEQATTLFILLSTLLLAVSVES). Cys-79 and Cys-308 form a disulfide bridge. Residue Ser-170 is part of the active site. A glycan (N-linked (GlcNAc...) asparagine) is linked at Asn-263. Asp-345 is a catalytic residue. Residue Asn-361 is glycosylated (N-linked (GlcNAc...) asparagine). His-403 is an active-site residue.

It belongs to the peptidase S10 family. In terms of tissue distribution, ubiquitous.

It localises to the secreted. In terms of biological role, probable carboxypeptidase. This chain is Serine carboxypeptidase-like 50 (SCPL50), found in Arabidopsis thaliana (Mouse-ear cress).